Reading from the N-terminus, the 511-residue chain is MTDIVLEPGAAPLSVWREIWRGAGVRLDPAAHAVVAQSAEAVTRILARGEPVYGINTGFGKLATVRIEDADLATLQRNLVLSHAAGVGEASPRAVVRLMMALKLASLAQGASGVRPVTVQLLERMIAQDLIPVVPGQGSVGASGDLAPLAHMAAAMLGVGEIETAGQRLPAGEALAAAGLAPLALGPKEGLALLNGTQFSTANALAGLFEAERLFRSALVTGALSTEAAKGSDTPFDARIHALRRQPGQVEAARALRELMAGSAIRASHLKDDERVQDPYCLRCQPQVMGAALDVLRQAAATLGFEANGVSDNPLIFAGDTNNGEDEALSGGNFHAEPVAFAADMIALAVCEIGSIAERRIAMLVDPALSGLPAFLTPKPGLNSGFMIPQVTAAALVSENKQLAHPASVDSIPTSANQEDHVSMAAHGARRLLAMTANLEGVVAIELLAAAQGCDFHAPLTSSEALERVRARLRRDVPSLDHDRHFAPDIAAAQAIVRAGELAFPDLPGVA.

Residues 142–144 (ASG) constitute a cross-link (5-imidazolinone (Ala-Gly)). Ser-143 carries the post-translational modification 2,3-didehydroalanine (Ser).

This sequence belongs to the PAL/histidase family. Post-translationally, contains an active site 4-methylidene-imidazol-5-one (MIO), which is formed autocatalytically by cyclization and dehydration of residues Ala-Ser-Gly.

The protein resides in the cytoplasm. The enzyme catalyses L-histidine = trans-urocanate + NH4(+). It participates in amino-acid degradation; L-histidine degradation into L-glutamate; N-formimidoyl-L-glutamate from L-histidine: step 1/3. In Phenylobacterium zucineum (strain HLK1), this protein is Histidine ammonia-lyase.